Here is a 361-residue protein sequence, read N- to C-terminus: Chorismate synthase (361 aa).

NADP(+) contacts are provided by Arg48 and Arg54. Residues 125–127 (RSS), 238–239 (NA), Gly278, 293–297 (KPTSS), and Arg319 each bind FMN.

It belongs to the chorismate synthase family. Homotetramer. The cofactor is FMNH2.

It catalyses the reaction 5-O-(1-carboxyvinyl)-3-phosphoshikimate = chorismate + phosphate. It participates in metabolic intermediate biosynthesis; chorismate biosynthesis; chorismate from D-erythrose 4-phosphate and phosphoenolpyruvate: step 7/7. In terms of biological role, catalyzes the anti-1,4-elimination of the C-3 phosphate and the C-6 proR hydrogen from 5-enolpyruvylshikimate-3-phosphate (EPSP) to yield chorismate, which is the branch point compound that serves as the starting substrate for the three terminal pathways of aromatic amino acid biosynthesis. This reaction introduces a second double bond into the aromatic ring system. The polypeptide is Chorismate synthase (Cronobacter sakazakii (strain ATCC BAA-894) (Enterobacter sakazakii)).